The chain runs to 203 residues: Thymidylate kinase (203 aa).

9–16 is an ATP binding site; it reads GPEGSGKT.

It belongs to the thymidylate kinase family.

It catalyses the reaction dTMP + ATP = dTDP + ADP. Phosphorylation of dTMP to form dTDP in both de novo and salvage pathways of dTTP synthesis. The sequence is that of Thymidylate kinase from Staphylococcus haemolyticus (strain JCSC1435).